Consider the following 144-residue polypeptide: Ribosome-binding factor A (144 aa).

Disordered regions lie at residues 1–22 (MPRH…QLRV) and 125–144 (TPAV…EEEQ). The segment covering 134-144 (QDPDSDREEEQ) has biased composition (acidic residues).

Belongs to the RbfA family. Monomer. Binds 30S ribosomal subunits, but not 50S ribosomal subunits or 70S ribosomes.

Its subcellular location is the cytoplasm. Functionally, one of several proteins that assist in the late maturation steps of the functional core of the 30S ribosomal subunit. Associates with free 30S ribosomal subunits (but not with 30S subunits that are part of 70S ribosomes or polysomes). Required for efficient processing of 16S rRNA. May interact with the 5'-terminal helix region of 16S rRNA. In Bradyrhizobium diazoefficiens (strain JCM 10833 / BCRC 13528 / IAM 13628 / NBRC 14792 / USDA 110), this protein is Ribosome-binding factor A.